A 138-amino-acid chain; its full sequence is Gonadotropin subunit beta-2 (138 aa).

The signal sequence occupies residues 1–21; the sequence is MPASSYFLLFFFMNFFSPAQS. 6 disulfides stabilise this stretch: Cys-27–Cys-75, Cys-41–Cys-90, Cys-44–Cys-128, Cys-52–Cys-106, Cys-56–Cys-108, and Cys-111–Cys-118. An N-linked (GlcNAc...) asparagine glycan is attached at Asn-31.

It belongs to the glycoprotein hormones subunit beta family. As to quaternary structure, heterodimer of an alpha and a beta chain.

Its subcellular location is the secreted. Involved in gametogenesis and steroidogenesis. The chain is Gonadotropin subunit beta-2 (cgbb) from Clarias gariepinus (North African catfish).